A 177-amino-acid chain; its full sequence is Calerythrin (177 aa).

4 consecutive EF-hand domains span residues 5–40, 45–90, 100–134, and 134–169; these read IASD…IAEA, AGAA…NLIF, VLGP…ALGM, and MSKA…FHFG. The Ca(2+) site is built by Asp-18, Asp-20, Asn-22, and Asp-29. Residues Asp-113, Asn-115, Asp-117, Gln-119, Glu-124, Asp-147, Asn-149, Asn-151, Glu-153, and Glu-158 each contribute to the Ca(2+) site.

This Saccharopolyspora erythraea (Streptomyces erythraeus) protein is Calerythrin.